Reading from the N-terminus, the 380-residue chain is Succinyl-diaminopimelate desuccinylase (380 aa).

H69 lines the Zn(2+) pocket. Residue D71 is part of the active site. A Zn(2+)-binding site is contributed by D102. E135 acts as the Proton acceptor in catalysis. E136, E164, and H353 together coordinate Zn(2+).

This sequence belongs to the peptidase M20A family. DapE subfamily. Homodimer. Zn(2+) serves as cofactor. The cofactor is Co(2+).

It carries out the reaction N-succinyl-(2S,6S)-2,6-diaminopimelate + H2O = (2S,6S)-2,6-diaminopimelate + succinate. It functions in the pathway amino-acid biosynthesis; L-lysine biosynthesis via DAP pathway; LL-2,6-diaminopimelate from (S)-tetrahydrodipicolinate (succinylase route): step 3/3. In terms of biological role, catalyzes the hydrolysis of N-succinyl-L,L-diaminopimelic acid (SDAP), forming succinate and LL-2,6-diaminopimelate (DAP), an intermediate involved in the bacterial biosynthesis of lysine and meso-diaminopimelic acid, an essential component of bacterial cell walls. This Cereibacter sphaeroides (strain KD131 / KCTC 12085) (Rhodobacter sphaeroides) protein is Succinyl-diaminopimelate desuccinylase.